Consider the following 676-residue polypeptide: UvrABC system protein C (676 aa).

The GIY-YIG domain maps to 16 to 95 (VEPGVYRFRD…IKEFDPRFNI (80 aa)). The 36-residue stretch at 208 to 243 (DRLVRDLERKMTAAAEDLDFERAARLRDDIGALRRA) folds into the UVR domain.

The protein belongs to the UvrC family. As to quaternary structure, interacts with UvrB in an incision complex.

The protein resides in the cytoplasm. In terms of biological role, the UvrABC repair system catalyzes the recognition and processing of DNA lesions. UvrC both incises the 5' and 3' sides of the lesion. The N-terminal half is responsible for the 3' incision and the C-terminal half is responsible for the 5' incision. In Mycobacterium sp. (strain KMS), this protein is UvrABC system protein C.